The chain runs to 669 residues: Protein BNIP5 (669 aa).

Disordered stretches follow at residues 1–116 (MPRS…REAQ), 131–259 (IEEP…QDDV), 273–401 (QLEE…RASE), and 413–544 (LQSA…SPER). The segment covering 34-47 (RSLDRQVPRKKDPE) has biased composition (basic and acidic residues). Over residues 48 to 73 (SSNTRCPSSATCRRTASDGARSSESP) the composition is skewed to polar residues. Basic and acidic residues-rich tracts occupy residues 104-113 (EDTKKERLPR) and 131-148 (IEEP…KGDL). A compositionally biased stretch (basic residues) spans 158-175 (RKKSHEKRTSRKKHSHRK). The segment covering 285-295 (EAVPPRKPTPL) has biased composition (pro residues). Residue Lys-314 forms a Glycyl lysine isopeptide (Lys-Gly) (interchain with G-Cter in SUMO2) linkage. Residues 346–357 (VSSQRASTSSSL) show a composition bias toward polar residues. Basic and acidic residues predominate over residues 390–401 (PEEKPLLDRASE). A compositionally biased stretch (basic residues) spans 445–462 (SQVKKSNLRRAFSLRKHS). Positions 516-528 (AAGGAPAGSPGAP) are enriched in low complexity.

The polypeptide is Protein BNIP5 (Bnip5) (Mus musculus (Mouse)).